Reading from the N-terminus, the 340-residue chain is Functional amyloid subunit FapC (340 aa).

Positions 1–24 (MKATMVLTPLALAMAAVLSVSAYA) are cleaved as a signal peptide. Residues 67–100 (NNASVSGSIKDASGNVGVNVAAGDNNQQANAAAL) form a FapC_R1 repeat. Residues 101-133 (ASADASFVFGTATASTSVLQSGYGNTLNNYSNP) are linker 1. One copy of the FapC_R2 repeat lies at 134–167 (NTASLSNSANNVSGNLGVNVAAGNFNQQKNDLAA). Residues 168 to 290 (AVSNGQYSTA…AIVGFKTPVT (123 aa)) form a linker 2 region. The FapC_R3 repeat unit spans residues 291–324 (NNASLSNSLQNVSGNVGVNIAAGGGNQQSNSLSI). Residues 328-331 (CSSC) carry the Cys-X-X-Cys motif.

This sequence belongs to the FapB/FapC family. In terms of assembly, the major component of purified amyloid fibrils. Fibrils are resistant to boiling in 2% (weight/vol) SDS and require &gt;90% (vol/vol) formic acid to dissolve. Interacts with FapA in vitro.

It is found in the fimbrium. It localises to the secreted. Its function is as follows. The major functional amyloid subunit in this bacterium. Upon overexpression of the endogenous six-gene locus (fapA-fapF), cells form large clumps during liquid growth, make large amounts of biofilm and produce amyloid fibrils. In Pseudomonas aeruginosa (strain ATCC 15692 / DSM 22644 / CIP 104116 / JCM 14847 / LMG 12228 / 1C / PRS 101 / PAO1), this protein is Functional amyloid subunit FapC.